We begin with the raw amino-acid sequence, 3630 residues long: Trimeric autotransporter adhesin AtaA (3630 aa).

The N-terminal stretch at 1-23 (MNKIYKVIWNATLLAWVAVSELA) is a signal peptide. The tract at residues 24–3487 (KGKTKSTTSK…TNQAVVNYLG (3464 aa)) is surface exposed passenger domain. The tract at residues 108-315 (SIAIGENAQG…ASDAVTVAQL (208 aa)) is N-terminal YadA-like head. The interval 316 to 2904 (DKAYDDTNGR…GRAATEEQLK (2589 aa)) is N-terminal stalk. The C-terminal YadA-like head stretch occupies residues 2905–3169 (AVITSNITEV…DSDAVNVAQL (265 aa)). Residues 3170 to 3561 (KAVGNQVVTT…DVEKKANAGI (392 aa)) form a C-terminal stalk region. Positions 3539–3574 (LDNAFRITNNRIDDVEKKANAGIAAAMALESAPYVP) are outer membrane translocation of the passenger domain. A run of 4 beta stranded transmembrane segments spans residues 3575–3585 (GKYTYAAGAAY), 3589–3599 (ENAVGVTLRKT), 3608–3614 (TGGVAAA), and 3618–3629 (DASVRIGISGVI). The translocator domain stretch occupies residues 3575–3630 (GKYTYAAGAAYHGGENAVGVTLRKTADNGRWSITGGVAAASQGDASVRIGISGVID).

Belongs to the autotransporter-2 (AT-2) (TC 1.B.40) family. Homotrimer. Interacts with TpgA.

The protein localises to the cell surface. The protein resides in the cell outer membrane. Functionally, responsible for autoagglutination, and for adhesion to abiotic and biotic surfaces such as polystyrene (PS), type I collagen, polypropylene (PP), polyvinylchloride (PVC), glass and stainless steel (SS). Adhesion is much stronger than that mediated by Yersinia YadA in a comparative assay. Confers autoagglutination and binding to PS, type I collagen, PP, PVC, glass and SS upon expression in Acinetobacter baylyi strain ADP1. Involved in rapid, irreversible adherence to polyurethane. Forms an unusual biofilm. An extended, surface exposed fiber binds to quartz crystals, PS and glass. It can be removed by washing in distilled water. This Acinetobacter sp. (strain Tol 5) protein is Trimeric autotransporter adhesin AtaA.